The chain runs to 404 residues: WD repeat and SOCS box-containing protein 2 (404 aa).

WD repeat units lie at residues 105-148 (PPSR…LLLN), 151-191 (GHQD…KQIQ), 195-234 (GHLQ…LIRK), 237-276 (GHQS…RLRS), and 291-330 (VHMS…PVAF). In terms of domain architecture, SOCS box spans 356–404 (HVQFWTAPRVLSSLKHLCRKALRSFLTTYQVLALPIPKKMKEFLTYRTF).

It functions in the pathway protein modification; protein ubiquitination. Its function is as follows. May be a substrate-recognition component of a SCF-like ECS (Elongin-Cullin-SOCS-box protein) E3 ubiquitin ligase complex which mediates the ubiquitination and subsequent proteasomal degradation of target proteins. The chain is WD repeat and SOCS box-containing protein 2 (Wsb2) from Mus musculus (Mouse).